A 104-amino-acid polypeptide reads, in one-letter code: Iron-sulfur cluster assembly protein CyaY (104 aa).

This sequence belongs to the frataxin family.

In terms of biological role, involved in iron-sulfur (Fe-S) cluster assembly. May act as a regulator of Fe-S biogenesis. The protein is Iron-sulfur cluster assembly protein CyaY of Aeromonas hydrophila subsp. hydrophila (strain ATCC 7966 / DSM 30187 / BCRC 13018 / CCUG 14551 / JCM 1027 / KCTC 2358 / NCIMB 9240 / NCTC 8049).